Here is an 809-residue protein sequence, read N- to C-terminus: Phospholipase D alpha 1 (809 aa).

A C2 domain is found at 1–125 (MAQILLHGTL…LDGHEIDKWV (125 aa)). Ca(2+) is bound at residue Asp186. The PLD phosphodiesterase 1 domain occupies 326–365 (TMFTHHQKIVVVDSALPGGGGSDKRRIVSFVGGLDLCDGR). Catalysis depends on residues His331, Lys333, and Asp338. His331 contributes to the a 1,2-diacyl-sn-glycero-3-phosphate binding site. Residues His371 and His405 each coordinate Ca(2+). The a 1,2-diacyl-sn-glycero-3-phosphate site is built by Gln521 and His660. Positions 655–682 (FMIYVHTKMMIVDDEYIIIGSANINQRS) constitute a PLD phosphodiesterase 2 domain. Active-site residues include His660, Lys662, and Asp667. Ca(2+) is bound at residue Glu721.

It belongs to the phospholipase D family. C2-PLD subfamily. It depends on Ca(2+) as a cofactor.

It carries out the reaction a 1,2-diacyl-sn-glycero-3-phosphocholine + H2O = a 1,2-diacyl-sn-glycero-3-phosphate + choline + H(+). Hydrolyzes glycerol-phospholipids at the terminal phosphodiesteric bond. Plays an important role in various cellular processes. The chain is Phospholipase D alpha 1 (PLD1) from Vigna unguiculata (Cowpea).